Consider the following 638-residue polypeptide: Chaperone protein HtpG (638 aa).

The segment at 1–344 is a; substrate-binding; that stretch reads MQKKETLEFQ…SNDLPLNVSR (344 aa). The segment at 345–560 is b; that stretch reads EILQNNENIY…ENDITTQMSK (216 aa). Positions 561–638 are c; sequence LLISTGQESP…LLLSNIIRLN (78 aa).

This sequence belongs to the heat shock protein 90 family. In terms of assembly, homodimer.

The protein localises to the cytoplasm. Functionally, molecular chaperone. Has ATPase activity. The sequence is that of Chaperone protein HtpG from Wigglesworthia glossinidia brevipalpis.